Here is a 390-residue protein sequence, read N- to C-terminus: Endothelial cell-selective adhesion molecule (390 aa).

The N-terminal stretch at 1–29 (MISLPGPLVTNLLRFLFLGLSALAPPSRA) is a signal peptide. The 114-residue stretch at 30-143 (ELQLHLPANQ…NGQASGHSIK (114 aa)) folds into the Ig-like V-type domain. At 30–248 (ELQLHLPANQ…LEVSTGPGAA (219 aa)) the chain is on the extracellular side. Asparagine 108, asparagine 169, asparagine 213, and asparagine 236 each carry an N-linked (GlcNAc...) asparagine glycan. The 87-residue stretch at 156-242 (PSCRLQGVPR…AQCNVTLEVS (87 aa)) folds into the Ig-like C2-type domain. A disulfide bridge links cysteine 174 with cysteine 224. A helical transmembrane segment spans residues 249–269 (VVAGAVVGTLVGLGLLAGLVL). The Cytoplasmic portion of the chain corresponds to 270–390 (LYHRRGKALE…PAQSQAGSLV (121 aa)). Phosphoserine is present on serine 301. The disordered stretch occupies residues 316-365 (ARALRPPHGPPRPGALTPTPSLSSQALPSPRLPTTDGANPQPISLIPGGV). A phosphothreonine mark is found at threonine 332 and threonine 334. Residues 333–342 (PTPSLSSQAL) are compositionally biased toward polar residues. Phosphoserine occurs at positions 336, 339, 344, and 371.

In terms of assembly, interacts with MAGI1.

The protein localises to the cell junction. It is found in the adherens junction. The protein resides in the tight junction. Its subcellular location is the cell membrane. Its function is as follows. Can mediate aggregation most likely through a homophilic molecular interaction. In Macaca fascicularis (Crab-eating macaque), this protein is Endothelial cell-selective adhesion molecule (ESAM).